A 347-amino-acid chain; its full sequence is NADH-ubiquinone oxidoreductase chain 2 (347 aa).

10 helical membrane passes run 3–23, 25–45, 59–79, 93–115, 149–169, 178–198, 200–220, 242–262, 274–294, and 323–343; these read PPILIIILSTVISGTMIVLTS, HWLLTWIGFEMNMLAIIPILM, YFLTQATASMLLMMGIIINLL, MASTMMTIAMTMKLGLAPFHFWV, INTNLLMTMATMSVLIGGWGG, ILAYSSIAHMGWMVAIMTYNP, VMILNLMMYIMMTLTSFMLFI, SFILVLMLSLGGLPPLSGFIP, EMIILPTLLAITALLNLYFYM, and MALLPPLIIISTMLLPLTPMM.

Belongs to the complex I subunit 2 family. As to quaternary structure, core subunit of respiratory chain NADH dehydrogenase (Complex I) which is composed of 45 different subunits. Interacts with TMEM242.

It localises to the mitochondrion inner membrane. It carries out the reaction a ubiquinone + NADH + 5 H(+)(in) = a ubiquinol + NAD(+) + 4 H(+)(out). Functionally, core subunit of the mitochondrial membrane respiratory chain NADH dehydrogenase (Complex I) which catalyzes electron transfer from NADH through the respiratory chain, using ubiquinone as an electron acceptor. Essential for the catalytic activity and assembly of complex I. The sequence is that of NADH-ubiquinone oxidoreductase chain 2 from Nandinia binotata (African palm civet).